Here is an 882-residue protein sequence, read N- to C-terminus: Valine--tRNA ligase (882 aa).

The short motif at 52–62 is the 'HIGH' region element; sequence PNVTGSLHMGH. The short motif at 539 to 543 is the 'KMSKS' region element; it reads KMSKS. ATP is bound at residue K542. The stretch at 816 to 882 forms a coiled coil; that stretch reads IDVAAERRRL…RINARLAVLQ (67 aa).

This sequence belongs to the class-I aminoacyl-tRNA synthetase family. ValS type 1 subfamily. As to quaternary structure, monomer.

It is found in the cytoplasm. The enzyme catalyses tRNA(Val) + L-valine + ATP = L-valyl-tRNA(Val) + AMP + diphosphate. In terms of biological role, catalyzes the attachment of valine to tRNA(Val). As ValRS can inadvertently accommodate and process structurally similar amino acids such as threonine, to avoid such errors, it has a 'posttransfer' editing activity that hydrolyzes mischarged Thr-tRNA(Val) in a tRNA-dependent manner. This Mycolicibacterium paratuberculosis (strain ATCC BAA-968 / K-10) (Mycobacterium paratuberculosis) protein is Valine--tRNA ligase.